The following is a 252-amino-acid chain: NAP1-related protein 2 (252 aa).

A compositionally biased stretch (basic and acidic residues) spans 1-15 (MTAPADKGKKAKTDA). The interval 1–23 (MTAPADKGKKAKTDADGGAAEEN) is disordered. The stretch at 26-67 (IDGALVLSIEKLQEIQDELEKVNEEASDKVLEVEQKYSEIRR) forms a coiled coil. A disordered region spans residues 222–252 (YFNNEAEELGEDDDEEGSDADEGEEDEEEEN). Residues 226–252 (EAEELGEDDDEEGSDADEGEEDEEEEN) show a composition bias toward acidic residues.

Belongs to the nucleosome assembly protein (NAP) family.

Its subcellular location is the nucleus. It is found in the cytoplasm. Acts as a histone H2A/H2B chaperone in nucleosome assembly. The chain is NAP1-related protein 2 from Oryza sativa subsp. indica (Rice).